Reading from the N-terminus, the 117-residue chain is Fluoride-specific ion channel FluC 2 (117 aa).

A run of 4 helical transmembrane segments spans residues Met-1–Ile-21, Ile-33–Gly-53, Met-61–Ser-81, and Ile-94–Gly-114. Na(+) is bound by residues Gly-71 and Thr-74.

Belongs to the fluoride channel Fluc/FEX (TC 1.A.43) family.

The protein resides in the cell membrane. The catalysed reaction is fluoride(in) = fluoride(out). Its activity is regulated as follows. Na(+) is not transported, but it plays an essential structural role and its presence is essential for fluoride channel function. Fluoride-specific ion channel. Important for reducing fluoride concentration in the cell, thus reducing its toxicity. The sequence is that of Fluoride-specific ion channel FluC 2 from Staphylococcus epidermidis (strain ATCC 35984 / DSM 28319 / BCRC 17069 / CCUG 31568 / BM 3577 / RP62A).